A 445-amino-acid polypeptide reads, in one-letter code: Ribosomal protein uS12 methylthiotransferase RimO (445 aa).

Positions I4–K119 constitute an MTTase N-terminal domain. 6 residues coordinate [4Fe-4S] cluster: C13, C48, C82, C156, C160, and C163. The region spanning T142–D372 is the Radical SAM core domain. A TRAM domain is found at K375–N441.

The protein belongs to the methylthiotransferase family. RimO subfamily. The cofactor is [4Fe-4S] cluster.

The protein localises to the cytoplasm. The catalysed reaction is L-aspartate(89)-[ribosomal protein uS12]-hydrogen + (sulfur carrier)-SH + AH2 + 2 S-adenosyl-L-methionine = 3-methylsulfanyl-L-aspartate(89)-[ribosomal protein uS12]-hydrogen + (sulfur carrier)-H + 5'-deoxyadenosine + L-methionine + A + S-adenosyl-L-homocysteine + 2 H(+). Catalyzes the methylthiolation of an aspartic acid residue of ribosomal protein uS12. The polypeptide is Ribosomal protein uS12 methylthiotransferase RimO (Clostridium botulinum (strain Okra / Type B1)).